Reading from the N-terminus, the 624-residue chain is Threonine--tRNA ligase (624 aa).

Residues 1–143 are editing domain; the sequence is MRLLFIHADE…SRTVTPEAAE (143 aa). The tract at residues 197–499 is catalytic; sequence AHVKLMREKE…EQEGKLPTLP (303 aa). Residues Cys-289, His-340, and His-467 each contribute to the Zn(2+) site. Positions 598–624 are disordered; that stretch reads LERETEGKPRVPLTIPDRLSRRPRFGR.

Belongs to the class-II aminoacyl-tRNA synthetase family. Homodimer. Zn(2+) serves as cofactor.

It is found in the cytoplasm. It carries out the reaction tRNA(Thr) + L-threonine + ATP = L-threonyl-tRNA(Thr) + AMP + diphosphate + H(+). In terms of biological role, catalyzes the attachment of threonine to tRNA(Thr) in a two-step reaction: L-threonine is first activated by ATP to form Thr-AMP and then transferred to the acceptor end of tRNA(Thr). Also edits incorrectly charged L-seryl-tRNA(Thr). The chain is Threonine--tRNA ligase from Methanopyrus kandleri (strain AV19 / DSM 6324 / JCM 9639 / NBRC 100938).